The sequence spans 239 residues: Ribosomal RNA small subunit methyltransferase G (239 aa).

Residues glycine 78, phenylalanine 83, 129–130 (AE), and arginine 148 each bind S-adenosyl-L-methionine.

This sequence belongs to the methyltransferase superfamily. RNA methyltransferase RsmG family.

It is found in the cytoplasm. Its function is as follows. Specifically methylates the N7 position of a guanine in 16S rRNA. The protein is Ribosomal RNA small subunit methyltransferase G of Clostridium botulinum (strain Loch Maree / Type A3).